We begin with the raw amino-acid sequence, 555 residues long: Small ribosomal subunit protein uS3m (555 aa).

Residues 1 to 20 form a disordered region; that stretch reads MARKGNPISVRLGKNRSSDS.

It belongs to the universal ribosomal protein uS3 family.

Its subcellular location is the mitochondrion. The sequence is that of Small ribosomal subunit protein uS3m (RPS3) from Brassica napus (Rape).